The primary structure comprises 146 residues: Superoxide dismutase [Mn] 2 (146 aa).

Mn(2+) contacts are provided by His-42, Asp-126, and His-130.

It belongs to the iron/manganese superoxide dismutase family. Mn(2+) serves as cofactor.

It catalyses the reaction 2 superoxide + 2 H(+) = H2O2 + O2. In terms of biological role, destroys superoxide anion radicals which are normally produced within the cells and which are toxic to biological systems. This chain is Superoxide dismutase [Mn] 2 (sod2), found in Haloferax mediterranei (Halobacterium mediterranei).